A 339-amino-acid chain; its full sequence is Anthranilate phosphoribosyltransferase (339 aa).

5-phospho-alpha-D-ribose 1-diphosphate contacts are provided by residues Gly81, 84–85, Thr89, 91–94, 109–117, and Ser121; these read GD, NVST, and KHGNRSVSS. Gly81 contributes to the anthranilate binding site. Ser93 contributes to the Mg(2+) binding site. Asn112 serves as a coordination point for anthranilate. Position 167 (Arg167) interacts with anthranilate. Residues Asp226 and Glu227 each coordinate Mg(2+).

Belongs to the anthranilate phosphoribosyltransferase family. Homodimer. Requires Mg(2+) as cofactor.

The catalysed reaction is N-(5-phospho-beta-D-ribosyl)anthranilate + diphosphate = 5-phospho-alpha-D-ribose 1-diphosphate + anthranilate. It participates in amino-acid biosynthesis; L-tryptophan biosynthesis; L-tryptophan from chorismate: step 2/5. Catalyzes the transfer of the phosphoribosyl group of 5-phosphorylribose-1-pyrophosphate (PRPP) to anthranilate to yield N-(5'-phosphoribosyl)-anthranilate (PRA). This is Anthranilate phosphoribosyltransferase from Persephonella marina (strain DSM 14350 / EX-H1).